We begin with the raw amino-acid sequence, 71 residues long: Small ribosomal subunit protein bS21 (71 aa).

Belongs to the bacterial ribosomal protein bS21 family.

The protein is Small ribosomal subunit protein bS21 of Nitrosococcus oceani (strain ATCC 19707 / BCRC 17464 / JCM 30415 / NCIMB 11848 / C-107).